The sequence spans 395 residues: MNQPWRTHLQTKLKQLHEQGQYRNLHVTEQAEETWLIRDEKRMLNLASNNYLGLAGDERLKEAAIVCTRKYGTGATASRLVVGNYSLYEEVERSICNWKGTEKALVVNSGFTANVGAISSLVCRHDIVFSDKLNHASIVDGIILSGAEHKRYRHNDLNHLEALLKTASPEKRKLIVTDTVFSMDGDTAHLRELVQLKEKYGAIIIVDEAHASGIYGIGGAGLSHIEKDLAQKIDIHMGTFSKALGCYGAYLTGDAIYIEYLQNMMRSFIFTTALPPSTLGAVQKAIEIVQEDHKRRENLIANGEYFRSKLREAGFNIGNSSTHIVPIVVGSNENTLRFSKRLQEAGIAAIAIRPPTVPVHSSRIRFAVTSQHTIADLKWAIDRITHIAKEEELFV.

Arginine 23 provides a ligand contact to substrate. 110–111 provides a ligand contact to pyridoxal 5'-phosphate; sequence GF. Histidine 135 is a binding site for substrate. Pyridoxal 5'-phosphate contacts are provided by residues serine 182, 207-210, and 239-242; these read DEAH and TFSK. At lysine 242 the chain carries N6-(pyridoxal phosphate)lysine. Threonine 356 contacts substrate.

The protein belongs to the class-II pyridoxal-phosphate-dependent aminotransferase family. BioF subfamily. As to quaternary structure, homodimer. Pyridoxal 5'-phosphate is required as a cofactor.

The catalysed reaction is 6-carboxyhexanoyl-[ACP] + L-alanine + H(+) = (8S)-8-amino-7-oxononanoate + holo-[ACP] + CO2. Its pathway is cofactor biosynthesis; biotin biosynthesis. Its function is as follows. Catalyzes the decarboxylative condensation of pimeloyl-[acyl-carrier protein] and L-alanine to produce 8-amino-7-oxononanoate (AON), [acyl-carrier protein], and carbon dioxide. This chain is Putative 8-amino-7-oxononanoate synthase (bioF), found in Bacillus thuringiensis subsp. konkukian (strain 97-27).